The sequence spans 640 residues: Cytochrome P450 monooxygenase cyp1 (640 aa).

Asn71 is a glycosylation site (N-linked (GlcNAc...) asparagine). Residues Leu120–Trp139 traverse the membrane as a helical segment. An N-linked (GlcNAc...) asparagine glycan is attached at Asn350. Cys572 serves as a coordination point for heme.

It belongs to the cytochrome P450 family. Requires heme as cofactor.

The protein localises to the membrane. It functions in the pathway secondary metabolite biosynthesis. Cytochrome P450 monooxygenase; part of the gene cluster that mediates the biosynthesis of the glycolipid biosurfactant ustilagic acid (UA). UA is a secreted cellobiose glycolipid that is toxic for many microorganisms and confers biocontrol activity to U.maydis. UA consists of 15,16-dihydroxypalmitic or 2,15,16-trihydroxypalmitic acid, which is O-glycosidically linked to cellobiose at its terminal hydroxyl group. In addition, the cellobiose moiety is acetylated and acylated with a short-chain hydroxy fatty acid. UA biosynthesis starts with omega-hydroxylation of palmitic acid catalyzed by the cytochrome P450 monooxygenase cyp1. Terminal hydroxylation of palmitic acid precedes subterminal hydroxylation catalyzed by the cytochrome P450 monooxygenase cyp2. Sequential glucosylation of the hydroxy fatty acid is probably catalyzed by the glycosyltransferase ugt1. The cellobiose lipid is further decorated by acetylation of the proximal glucose residue and by acylation with a short-chain beta-hydroxy fatty acid at the distal glucose residue. The acyltransferase uat1 may be a good candidate for catalyzing either acetylation or acylation of the cellobiose lipid. The fatty acid synthase fas2 may be involved in synthesis of the carbon backbone of the short-chain beta-hydroxy fatty acid esterified to the cellobiose disaccharide. The secreted UA consists of a mixture of both alpha-hydroxylated and non-hydroxylated glycolipids; therefore, alpha-hydroxylation of the long-chain fatty, catalyzed by the fatty acid hydroxylase ahd1, occurs late in UA biosynthesis and may be the last step before secretion. The polypeptide is Cytochrome P450 monooxygenase cyp1 (Mycosarcoma maydis (Corn smut fungus)).